Reading from the N-terminus, the 1505-residue chain is MGPKKGKRSHSKNHHHHNNGNNNNNNNSGGGSSSDILYTYSQDTRILLFKVILTQNEEIICMVIQIAYGLPGLPKISDISRDLGILILKLPNRTIRELELFLESKNIYFREDQHINYLNEIPQPTTTTTSPPPPPPPSSISTTTTTTTATAIEIESSSGLTSNITDSTEIQLDSTTTDTKTTSTTSTTTNNSSDSNNNNNNNNNNNSNNILNFPFNCQNKSKQKRPISKEESFNKMVQYNFDLGKIFDEFTREVLLDDLKNDLKIDNIPIDNISISPTPIISPVFQEYDLFLMDSFIILCGQLDNVKLTLEEFKDYYKKYKLLNQYIEDFKDNLINDFLVTVEILASWYIPQKDYSIVKFINCFGEMLDSTIIESFSYIFNKTIKKEDDWSISFIQAALGSNEEFKRQVMCLNDELIQDRYDQSLYSIMHPIKFDNVREFILIYSRDENYFEPQEFWYLICKYDAIAITQHIINNNIAEEDLSKRSGKTYNSNLSENPLEINPLSLLEICSANFSHKIASILFQFYDFKDSMPTRFSLRGVFKPTTTTTTTTTTTTTTTTTIDKDEKDKENNNNNVISQQFQYFRVLDVNCYFNDVIKKRAPIFIDLMTQSNIYLNTEVGEGSDENVDTHESIYSFQNSTEYLAINSNSIHRLKRSSISLLSKVLEFNDRDTLISLLKNLTQGGCTLCKDLIDEKQLLITISRPQYHQSIQILHQNGYTIIPKYQLRDPYIFFAGSKQILQYLLEIHTNSLSETIDIRHWIQAIMSAGQYSSETEFFQYYPKIQELSLRDKYSRTLNILELQYILGHIEGIEFLLEKYLDFTKPYHLDNQELLEIFDVTFVQKKDIRTEESLKAEKDLLEQEENEKKRLKEKRKKEEKEKKKQQNLKQKSLITNNTTTTTTTTPIPITVPIPTQTQTPTQTPTQTPIPTPIPTTPIPTTPIPIPIQLTPTTPKTPKTPKTPKTPTTPKTPITPKTPKNSTLDKQTISTPKTPPPLSVNTTPITPSPPPQTIATTITTTTTTPKTTKTTTTSKIPTLIIELNKYDISIGKFKFSRKDEFIIGRGSNGTLVFKGIWNDRIPVAIKQMHKAFNPLISKEIEVLITLTNKNCNNIVRYIDQEEDDMFVYLGLTLCNGSLQNLVEKDLEINLISTSNNENNNNNKLKNFIGSELRLLELIKDIVYGIQFLHQQGIVHNDLNPRNILIKDDRFIISDLGLSKMEVTSSYSFTMHAPTGQEGFHPAEVLLEKRKTKSVDIFSMGCILFYLMTGGQHPFGDKFFRMANILTDKPILEPLKHNLVACDLISQMISKNESDRPTTENILLHPFFWNHEKKVKFIDASLNLFKDSNGLFTSKLNKLINQFQDTDGVNTTSTPFLSKPWNQLIDPTLIEHITNKQNQLSGGSSIGNNNNNSLTLSGKKFYFYDYSQVKDLVRCIRNTIQHHKEIQRLISQSPSSSNKQEVLDCLESQELVLSYFEEKVPDLLLFLYQKFKKHLDSKSLIYFNDLIIK.

Residues 1-18 show a composition bias toward basic residues; the sequence is MGPKKGKRSHSKNHHHHN. Disordered regions lie at residues 1-30, 121-211, 548-571, and 862-1013; these read MGPK…NSGG, IPQP…NNIL, TTTT…DKEN, and EENE…TIAT. Residues 139 to 158 are compositionally biased toward low complexity; the sequence is SISTTTTTTTATAIEIESSS. Residues 159-172 show a composition bias toward polar residues; the sequence is GLTSNITDSTEIQL. Composition is skewed to low complexity over residues 173–209 and 548–561; these read DSTT…NSNN and TTTT…TTTT. Composition is skewed to basic and acidic residues over residues 562–571 and 862–882; these read IDKDEKDKEN and EENE…EKKK. Residues 846–892 adopt a coiled-coil conformation; it reads IRTEESLKAEKDLLEQEENEKKRLKEKRKKEEKEKKKQQNLKQKSLI. The span at 896–924 shows a compositional bias: low complexity; sequence TTTTTTTTPIPITVPIPTQTQTPTQTPTQ. The segment covering 925–943 has biased composition (pro residues); that stretch reads TPIPTPIPTTPIPTTPIPI. 2 stretches are compositionally biased toward low complexity: residues 944 to 954 and 960 to 977; these read PIQLTPTTPKT and TPKT…KTPK. Positions 978-989 are enriched in polar residues; it reads NSTLDKQTISTP. In terms of domain architecture, Protein kinase spans 1054-1324; sequence RKDEFIIGRG…TENILLHPFF (271 aa). Residues 1060–1068 and Lys1083 each bind ATP; that span reads IGRGSNGTL. The active-site Proton acceptor is the Asp1194. One can recognise a KEN domain in the interval 1327–1505; that stretch reads HEKKVKFIDA…LIYFNDLIIK (179 aa).

Belongs to the protein kinase superfamily. Ser/Thr protein kinase family.

It carries out the reaction L-seryl-[protein] + ATP = O-phospho-L-seryl-[protein] + ADP + H(+). It catalyses the reaction L-threonyl-[protein] + ATP = O-phospho-L-threonyl-[protein] + ADP + H(+). This chain is Probable serine/threonine-protein kinase irlD (irlD), found in Dictyostelium discoideum (Social amoeba).